Reading from the N-terminus, the 586-residue chain is Probable zinc metalloprotease EGY3, chloroplastic (586 aa).

A chloroplast-targeting transit peptide spans 1–54 (MASSSLVTSLLFSSSSSSNTATSTSSRRSFSLFSKNQYCKPRPLRRSSSRLLVR). Disordered regions lie at residues 13–32 (SSSS…SFSL) and 58–122 (QQQQ…DWRS). Residues 61-73 (QEEKAAPAAESHH) are compositionally biased toward basic and acidic residues. A coiled-coil region spans residues 103-195 (VKKSKEELEE…NTFKALDLNK (93 aa)). 7 consecutive transmembrane segments (helical) span residues 287-307 (LSAV…SGFF), 318-338 (VSDV…SEIA), 389-409 (ASAY…DGSL), 427-447 (PLLS…GNVL), 454-474 (VGVP…VTSL), 506-526 (VALG…WGLF), and 550-570 (YAWG…NGGG).

This sequence belongs to the peptidase M50B family.

The protein localises to the plastid. The protein resides in the chloroplast membrane. Probable membrane-associated metalloprotease that may be involved in chloroplast development. This Oryza sativa subsp. japonica (Rice) protein is Probable zinc metalloprotease EGY3, chloroplastic (EGY3).